The chain runs to 243 residues: Cell division protein ZipA (243 aa).

The Periplasmic segment spans residues 1 to 4; sequence MSDV. The chain crosses the membrane as a helical span at residues 5–25; that stretch reads TLLRIGIAIVGILFVAAVFFF. At 26-243 the chain is on the cytoplasmic side; the sequence is STPKTSAHRV…VPPLIKNSRW (218 aa). Residues 32-89 form a disordered region; the sequence is AHRVRTKKEEPPRERREPMLSTEVDNSPHQSVDEVPASVPQQQVNPEATKPGEIELGK. Residues 38-49 are compositionally biased toward basic and acidic residues; sequence KKEEPPRERREP.

The protein belongs to the ZipA family. Interacts with FtsZ via their C-terminal domains.

The protein localises to the cell inner membrane. Essential cell division protein that stabilizes the FtsZ protofilaments by cross-linking them and that serves as a cytoplasmic membrane anchor for the Z ring. Also required for the recruitment to the septal ring of downstream cell division proteins. This is Cell division protein ZipA from Xylella fastidiosa (strain Temecula1 / ATCC 700964).